The chain runs to 412 residues: Phosphatidylinositol 3,4,5-trisphosphate 3-phosphatase and protein-tyrosine-phosphatase PTEN1 (412 aa).

A Phosphatase tensin-type domain is found at 42-211; it reads RRLIIGGYDL…KYWSDLLSFS (170 aa). Catalysis depends on C152, which acts as the Phosphocysteine intermediate. The C2 tensin-type domain maps to 239-396; that stretch reads VDSVFFVVSE…FSLELLFGPA (158 aa).

This sequence belongs to the PTEN phosphatase protein family. As to expression, expressed exclusively in pollen grains during the late stage of development (at protein level).

It carries out the reaction O-phospho-L-tyrosyl-[protein] + H2O = L-tyrosyl-[protein] + phosphate. The catalysed reaction is a 1,2-diacyl-sn-glycero-3-phospho-(1D-myo-inositol-3,4,5-trisphosphate) + H2O = a 1,2-diacyl-sn-glycero-3-phospho-(1D-myo-inositol-4,5-bisphosphate) + phosphate. Its activity is regulated as follows. Inhibited by vanadate. Protein tyrosine phosphatase that also exhibits lipid phosphatase activity. Can use phosphatidylinositol substrates such as PtdIns(3,4,5)P(3) as substrate. Pollen-specific phosphatase required for pollen development. The chain is Phosphatidylinositol 3,4,5-trisphosphate 3-phosphatase and protein-tyrosine-phosphatase PTEN1 from Arabidopsis thaliana (Mouse-ear cress).